The following is an 87-amino-acid chain: MVINSFISSISKEEKKGSVEFQVFCFTDKIRKLTSHLELHKKDFLSQRGMRKILGKRQRMLAYLSNKNKVRYKKLIGQLNIREPKTR.

It belongs to the universal ribosomal protein uS15 family. In terms of assembly, part of the 30S ribosomal subunit.

It localises to the plastid. Its subcellular location is the chloroplast. This Amborella trichopoda protein is Small ribosomal subunit protein uS15c (rps15).